The chain runs to 785 residues: Conidiophore development regulator abaA (785 aa).

The interval methionine 1–proline 22 is disordered. Residues glycine 130–aspartate 204 constitute a DNA-binding region (TEA). The disordered stretch occupies residues glutamate 213–asparagine 232.

This sequence belongs to the TEC1 family.

The protein localises to the nucleus. In terms of biological role, brlA, abaA and wetA are pivotal regulators of conidiophore development and conidium maturation. They act individually and together to regulate their own expression and that of numerous other sporulation-specific genes. Binds to the sequence 5'-CATTCY-3', where Y is a pyrimidine, making both major- and minor-groove contacts. Controls expression of wetA. In Aspergillus oryzae (strain ATCC 42149 / RIB 40) (Yellow koji mold), this protein is Conidiophore development regulator abaA.